The chain runs to 296 residues: Putative mannose 6-phosphate receptor-like protein C530.09c (296 aa).

The first 25 residues, 1–25, serve as a signal peptide directing secretion; that stretch reads MRLLTCLINVLAGLTLFSQFQRAFG. Over 26 to 206 the chain is Lumenal; it reads LTITRRGFKV…TVKKDSTLNP (181 aa). Residues 42–197 form the MRH domain; that stretch reads PFCALHHPNT…EWKTIHACPT (156 aa). Cysteine 44 and cysteine 87 are oxidised to a cystine. 5 N-linked (GlcNAc...) asparagine glycosylation sites follow: asparagine 64, asparagine 81, asparagine 93, asparagine 96, and asparagine 143. Disulfide bonds link cysteine 147–cysteine 183 and cysteine 163–cysteine 195. The chain crosses the membrane as a helical span at residues 207–227; it reads VSVFLLFCAIAFLAYFVGGFV. Over 228–249 the chain is Cytoplasmic; that stretch reads YQRVVLNARGLRQIPNYEMWRS. Residues 250-270 form a helical membrane-spanning segment; it reads LFGFISDIVIILYSSILSILP. Topologically, residues 271 to 296 are lumenal; sequence SSITRMRGNRRNIDYVEDALIDDIDT.

Belongs to the MRL1/IGF2R family.

The protein localises to the golgi apparatus. It localises to the trans-Golgi network membrane. The protein resides in the endosome membrane. This is Putative mannose 6-phosphate receptor-like protein C530.09c from Schizosaccharomyces pombe (strain 972 / ATCC 24843) (Fission yeast).